The chain runs to 148 residues: Large ribosomal subunit protein bL9 (148 aa).

The protein belongs to the bacterial ribosomal protein bL9 family.

In terms of biological role, binds to the 23S rRNA. This is Large ribosomal subunit protein bL9 from Coprothermobacter proteolyticus (strain ATCC 35245 / DSM 5265 / OCM 4 / BT).